We begin with the raw amino-acid sequence, 200 residues long: Small ribosomal subunit protein eS8A (200 aa).

Disordered stretches follow at residues 1–40 (MGIT…RIGP) and 123–145 (SKGK…KHSA). Residues 135–145 (KSKHVQRKHSA) show a composition bias toward basic residues.

Belongs to the eukaryotic ribosomal protein eS8 family. As to quaternary structure, component of the small ribosomal subunit (SSU). Mature yeast ribosomes consist of a small (40S) and a large (60S) subunit. The 40S small subunit contains 1 molecule of ribosomal RNA (18S rRNA) and at least 33 different proteins. The large 60S subunit contains 3 rRNA molecules (25S, 5.8S and 5S rRNA) and at least 46 different proteins.

Its subcellular location is the cytoplasm. Component of the ribosome, a large ribonucleoprotein complex responsible for the synthesis of proteins in the cell. The small ribosomal subunit (SSU) binds messenger RNAs (mRNAs) and translates the encoded message by selecting cognate aminoacyl-transfer RNA (tRNA) molecules. The large subunit (LSU) contains the ribosomal catalytic site termed the peptidyl transferase center (PTC), which catalyzes the formation of peptide bonds, thereby polymerizing the amino acids delivered by tRNAs into a polypeptide chain. The nascent polypeptides leave the ribosome through a tunnel in the LSU and interact with protein factors that function in enzymatic processing, targeting, and the membrane insertion of nascent chains at the exit of the ribosomal tunnel. This Schizosaccharomyces pombe (strain 972 / ATCC 24843) (Fission yeast) protein is Small ribosomal subunit protein eS8A (rps801).